The sequence spans 603 residues: Elongation factor 4 (603 aa).

The tr-type G domain maps to 7-191 (SNIRNFSIVA…AIVTRLPPPK (185 aa)). Residues 19–24 (DHGKST) and 138–141 (NKVD) contribute to the GTP site.

This sequence belongs to the TRAFAC class translation factor GTPase superfamily. Classic translation factor GTPase family. LepA subfamily.

The protein localises to the cell inner membrane. It catalyses the reaction GTP + H2O = GDP + phosphate + H(+). Its function is as follows. Required for accurate and efficient protein synthesis under certain stress conditions. May act as a fidelity factor of the translation reaction, by catalyzing a one-codon backward translocation of tRNAs on improperly translocated ribosomes. Back-translocation proceeds from a post-translocation (POST) complex to a pre-translocation (PRE) complex, thus giving elongation factor G a second chance to translocate the tRNAs correctly. Binds to ribosomes in a GTP-dependent manner. The chain is Elongation factor 4 from Bradyrhizobium diazoefficiens (strain JCM 10833 / BCRC 13528 / IAM 13628 / NBRC 14792 / USDA 110).